A 211-amino-acid chain; its full sequence is Urease accessory protein UreF (211 aa).

Positions 71-93 (DDADRETDARTPAPAARHASRSQ) are disordered.

It belongs to the UreF family. In terms of assembly, ureD, UreF and UreG form a complex that acts as a GTP-hydrolysis-dependent molecular chaperone, activating the urease apoprotein by helping to assemble the nickel containing metallocenter of UreC. The UreE protein probably delivers the nickel.

The protein resides in the cytoplasm. In terms of biological role, required for maturation of urease via the functional incorporation of the urease nickel metallocenter. The chain is Urease accessory protein UreF from Mycobacterium tuberculosis (strain ATCC 25177 / H37Ra).